A 94-amino-acid chain; its full sequence is C-X-C motif chemokine 11 (94 aa).

An N-terminal signal peptide occupies residues 1–21; that stretch reads MSVKGMAIALAVILCATVVQG. At R27 the chain carries Citrulline; by PAD2. 2 disulfide bridges follow: C30–C57 and C32–C74.

As to quaternary structure, interacts with TNFAIP6 (via Link domain). In terms of tissue distribution, high levels in peripheral blood leukocytes, pancreas and liver astrocytes. Moderate levels in thymus, spleen and lung. Low levels in placenta, prostate and small intestine. Also found in epidermal basal layer keratinocytes in skin disorders.

It localises to the secreted. Functionally, chemotactic for interleukin-activated T-cells but not unstimulated T-cells, neutrophils or monocytes. Induces calcium release in activated T-cells. Binds to CXCR3. May play an important role in CNS diseases which involve T-cell recruitment. May play a role in skin immune responses. The protein is C-X-C motif chemokine 11 (CXCL11) of Homo sapiens (Human).